Consider the following 182-residue polypeptide: Ribosome maturation factor RimM (182 aa).

Residues 102–182 enclose the PRC barrel domain; sequence GEGDYYWKDL…TIEVDWDPGF (81 aa).

Belongs to the RimM family. In terms of assembly, binds ribosomal protein uS19.

The protein localises to the cytoplasm. An accessory protein needed during the final step in the assembly of 30S ribosomal subunit, possibly for assembly of the head region. Essential for efficient processing of 16S rRNA. May be needed both before and after RbfA during the maturation of 16S rRNA. It has affinity for free ribosomal 30S subunits but not for 70S ribosomes. The polypeptide is Ribosome maturation factor RimM (Pectobacterium carotovorum subsp. carotovorum (strain PC1)).